Reading from the N-terminus, the 368-residue chain is 1-deoxy-D-xylulose 5-phosphate reductoisomerase (368 aa).

Positions 7, 8, 9, 10, 31, 32, 33, and 113 each coordinate NADPH. 1-deoxy-D-xylulose 5-phosphate is bound at residue lysine 114. An NADPH-binding site is contributed by glutamate 115. Residue aspartate 133 participates in Mn(2+) binding. Residues serine 134, glutamate 135, serine 158, and histidine 181 each coordinate 1-deoxy-D-xylulose 5-phosphate. Position 135 (glutamate 135) interacts with Mn(2+). Glycine 187 lines the NADPH pocket. Residues serine 194, asparagine 199, lysine 200, and glutamate 203 each coordinate 1-deoxy-D-xylulose 5-phosphate. Mn(2+) is bound at residue glutamate 203.

Belongs to the DXR family. Requires Mg(2+) as cofactor. The cofactor is Mn(2+).

It carries out the reaction 2-C-methyl-D-erythritol 4-phosphate + NADP(+) = 1-deoxy-D-xylulose 5-phosphate + NADPH + H(+). Its pathway is isoprenoid biosynthesis; isopentenyl diphosphate biosynthesis via DXP pathway; isopentenyl diphosphate from 1-deoxy-D-xylulose 5-phosphate: step 1/6. Functionally, catalyzes the NADPH-dependent rearrangement and reduction of 1-deoxy-D-xylulose-5-phosphate (DXP) to 2-C-methyl-D-erythritol 4-phosphate (MEP). This chain is 1-deoxy-D-xylulose 5-phosphate reductoisomerase, found in Helicobacter pylori (strain J99 / ATCC 700824) (Campylobacter pylori J99).